The primary structure comprises 645 residues: Protein FAM47B (645 aa).

Basic and acidic residues-rich tracts occupy residues 1-11 (MGDRRPQDRPR), 238-251 (EPPETRASHLRVDP), and 288-299 (PETRVSHLHPEP). Disordered stretches follow at residues 1 to 23 (MGDRRPQDRPRSQGMDSKPWYCD) and 168 to 321 (AREK…SLCP).

The protein belongs to the FAM47 family.

In Homo sapiens (Human), this protein is Protein FAM47B (FAM47B).